A 242-amino-acid polypeptide reads, in one-letter code: Peptidase E (242 aa).

Active-site charge relay system residues include serine 123, aspartate 138, and histidine 160.

This sequence belongs to the peptidase S51 family.

It is found in the cytoplasm. It carries out the reaction Dipeptidase E catalyzes the hydrolysis of dipeptides Asp-|-Xaa. It does not act on peptides with N-terminal Glu, Asn or Gln, nor does it cleave isoaspartyl peptides.. Functionally, hydrolyzes dipeptides containing N-terminal aspartate residues. May play a role in allowing the cell to use peptide aspartate to spare carbon otherwise required for the synthesis of the aspartate family of amino acids. The protein is Peptidase E of Nostoc sp. (strain PCC 7120 / SAG 25.82 / UTEX 2576).